A 681-amino-acid polypeptide reads, in one-letter code: Potassium-transporting ATPase ATP-binding subunit (681 aa).

The next 4 helical transmembrane spans lie at 37-57, 64-84, 218-238, and 255-275; these read MFVV…PTYF, VGYN…ANFA, IALT…VMTL, and IALL…AIGI. The active-site 4-aspartylphosphate intermediate is D306. ATP-binding positions include D343, E347, 375–382, and K394; that span reads FSAETRMS. The Mg(2+) site is built by D517 and D521. 3 consecutive transmembrane segments (helical) span residues 573-595, 615-635, and 655-675; these read ALTT…AIIS, AILS…PIAM, and IYGL…DMII.

This sequence belongs to the cation transport ATPase (P-type) (TC 3.A.3) family. Type IA subfamily. The system is composed of three essential subunits: KdpA, KdpB and KdpC.

It localises to the cell membrane. The catalysed reaction is K(+)(out) + ATP + H2O = K(+)(in) + ADP + phosphate + H(+). In terms of biological role, part of the high-affinity ATP-driven potassium transport (or Kdp) system, which catalyzes the hydrolysis of ATP coupled with the electrogenic transport of potassium into the cytoplasm. This subunit is responsible for energy coupling to the transport system and for the release of the potassium ions to the cytoplasm. This Caldanaerobacter subterraneus subsp. tengcongensis (strain DSM 15242 / JCM 11007 / NBRC 100824 / MB4) (Thermoanaerobacter tengcongensis) protein is Potassium-transporting ATPase ATP-binding subunit.